We begin with the raw amino-acid sequence, 405 residues long: Formate-dependent phosphoribosylglycinamide formyltransferase (405 aa).

N(1)-(5-phospho-beta-D-ribosyl)glycinamide is bound by residues 22–23 (EL) and Glu82. Residues Arg115, Lys162, 167 to 172 (SSGKGQ), 202 to 205 (EGFI), and Glu210 each bind ATP. The ATP-grasp domain occupies 120–320 (RLAAETLGLP…EFELHARAIL (201 aa)). Mg(2+) contacts are provided by Glu279 and Glu291. Residues Asp298, Lys367, and 374–375 (RR) contribute to the N(1)-(5-phospho-beta-D-ribosyl)glycinamide site.

Belongs to the PurK/PurT family. Homodimer.

The enzyme catalyses N(1)-(5-phospho-beta-D-ribosyl)glycinamide + formate + ATP = N(2)-formyl-N(1)-(5-phospho-beta-D-ribosyl)glycinamide + ADP + phosphate + H(+). Its pathway is purine metabolism; IMP biosynthesis via de novo pathway; N(2)-formyl-N(1)-(5-phospho-D-ribosyl)glycinamide from N(1)-(5-phospho-D-ribosyl)glycinamide (formate route): step 1/1. Involved in the de novo purine biosynthesis. Catalyzes the transfer of formate to 5-phospho-ribosyl-glycinamide (GAR), producing 5-phospho-ribosyl-N-formylglycinamide (FGAR). Formate is provided by PurU via hydrolysis of 10-formyl-tetrahydrofolate. The polypeptide is Formate-dependent phosphoribosylglycinamide formyltransferase (Leptothrix cholodnii (strain ATCC 51168 / LMG 8142 / SP-6) (Leptothrix discophora (strain SP-6))).